Here is a 69-residue protein sequence, read N- to C-terminus: Large ribosomal subunit protein uL29 (69 aa).

This sequence belongs to the universal ribosomal protein uL29 family.

The sequence is that of Large ribosomal subunit protein uL29 from Synechococcus sp. (strain CC9902).